Consider the following 1588-residue polypeptide: Pentafunctional AROM polypeptide (1588 aa).

The segment at 1-392 (MVQLAKVPIL…YGDSAQFVSD (392 aa)) is 3-dehydroquinate synthase. NAD(+)-binding positions include 43–45 (DTN), 78–81 (ETSK), 109–111 (GGV), and Asp114. A 7-phospho-2-dehydro-3-deoxy-D-arabino-heptonate-binding site is contributed by Arg125. An NAD(+)-binding site is contributed by 134-135 (TS). Residues Asp141 and Lys147 each coordinate 7-phospho-2-dehydro-3-deoxy-D-arabino-heptonate. Position 156 (Lys156) interacts with NAD(+). Asn157 provides a ligand contact to 7-phospho-2-dehydro-3-deoxy-D-arabino-heptonate. NAD(+) is bound by residues 174–177 (WLET) and Asn185. Glu189 is a Zn(2+) binding site. Residues 189–192 (EVIK) and Lys258 contribute to the 7-phospho-2-dehydro-3-deoxy-D-arabino-heptonate site. Glu268 (proton acceptor; for 3-dehydroquinate synthase activity) is an active-site residue. Residues 272-276 (RNLLN) and His279 contribute to the 7-phospho-2-dehydro-3-deoxy-D-arabino-heptonate site. His279 is a Zn(2+) binding site. Catalysis depends on His283, which acts as the Proton acceptor; for 3-dehydroquinate synthase activity. 7-phospho-2-dehydro-3-deoxy-D-arabino-heptonate-binding residues include His295 and Lys364. Residue His295 coordinates Zn(2+). Residues 405–871 (VYPFKDIPAD…WDVLHSELGA (467 aa)) are EPSP synthase. Cys853 serves as the catalytic For EPSP synthase activity. The interval 890 to 1080 (SVVIIGMRAA…IPSGRSAFVC (191 aa)) is shikimate kinase. 895-902 (GMRAAGKT) is a binding site for ATP. Residues 1081–1293 (LTFDDLTEQT…AAPGQLTVAQ (213 aa)) form a 3-dehydroquinase region. The active-site Proton acceptor; for 3-dehydroquinate dehydratase activity is His1198. Lys1227 acts as the Schiff-base intermediate with substrate; for 3-dehydroquinate dehydratase activity in catalysis. Positions 1306–1588 (PKELFVVGKP…KAIFDAVTKE (283 aa)) are shikimate dehydrogenase.

The protein in the N-terminal section; belongs to the sugar phosphate cyclases superfamily. Dehydroquinate synthase family. This sequence in the 2nd section; belongs to the EPSP synthase family. It in the 3rd section; belongs to the shikimate kinase family. In the 4th section; belongs to the type-I 3-dehydroquinase family. The protein in the C-terminal section; belongs to the shikimate dehydrogenase family. As to quaternary structure, homodimer. Zn(2+) is required as a cofactor.

Its subcellular location is the cytoplasm. It catalyses the reaction 7-phospho-2-dehydro-3-deoxy-D-arabino-heptonate = 3-dehydroquinate + phosphate. It carries out the reaction 3-dehydroquinate = 3-dehydroshikimate + H2O. The enzyme catalyses shikimate + NADP(+) = 3-dehydroshikimate + NADPH + H(+). The catalysed reaction is shikimate + ATP = 3-phosphoshikimate + ADP + H(+). It catalyses the reaction 3-phosphoshikimate + phosphoenolpyruvate = 5-O-(1-carboxyvinyl)-3-phosphoshikimate + phosphate. It participates in metabolic intermediate biosynthesis; chorismate biosynthesis; chorismate from D-erythrose 4-phosphate and phosphoenolpyruvate: step 2/7. It functions in the pathway metabolic intermediate biosynthesis; chorismate biosynthesis; chorismate from D-erythrose 4-phosphate and phosphoenolpyruvate: step 3/7. The protein operates within metabolic intermediate biosynthesis; chorismate biosynthesis; chorismate from D-erythrose 4-phosphate and phosphoenolpyruvate: step 4/7. Its pathway is metabolic intermediate biosynthesis; chorismate biosynthesis; chorismate from D-erythrose 4-phosphate and phosphoenolpyruvate: step 5/7. It participates in metabolic intermediate biosynthesis; chorismate biosynthesis; chorismate from D-erythrose 4-phosphate and phosphoenolpyruvate: step 6/7. Its function is as follows. The AROM polypeptide catalyzes 5 consecutive enzymatic reactions in prechorismate polyaromatic amino acid biosynthesis. This Saccharomyces cerevisiae (strain YJM789) (Baker's yeast) protein is Pentafunctional AROM polypeptide.